The chain runs to 337 residues: Visual pigment-like receptor peropsin (337 aa).

Topologically, residues Met-1 to Ser-26 are extracellular. An N-linked (GlcNAc...) asparagine glycan is attached at Asn-9. Residues Val-27–Ile-49 form a helical membrane-spanning segment. At Phe-50 to Asn-61 the chain is on the cytoplasmic side. Residues Ala-62–Leu-87 form a helical membrane-spanning segment. At His-88–Tyr-101 the chain is on the extracellular side. Cys-98 and Cys-175 are disulfide-bonded. The helical transmembrane segment at Ala-102–Met-121 threads the bilayer. The Cytoplasmic portion of the chain corresponds to Asp-122–Thr-140. A helical membrane pass occupies residues Tyr-141–Ala-164. Over Ser-165 to Ser-188 the chain is Extracellular. The N-linked (GlcNAc...) asparagine glycan is linked to Asn-182. A helical membrane pass occupies residues Tyr-189–Val-212. The Cytoplasmic portion of the chain corresponds to Ser-213–Lys-240. A helical membrane pass occupies residues Met-241–Cys-264. Over Phe-265 to Pro-272 the chain is Extracellular. A helical transmembrane segment spans residues Pro-273 to Ala-297. At Lys-284 the chain carries N6-(retinylidene)lysine. Topologically, residues His-298–Ile-337 are cytoplasmic.

This sequence belongs to the G-protein coupled receptor 1 family. Opsin subfamily. As to expression, found only in the eye, where it is localized to the retinal pigment epithelium (RPE). In the RPE, it is localized to the microvilli that surround the photoreceptor outer segments.

The protein localises to the membrane. Functionally, may play a role in rpe physiology either by detecting light directly or by monitoring the concentration of retinoids or other photoreceptor-derived compounds. The sequence is that of Visual pigment-like receptor peropsin (Rrh) from Mus musculus (Mouse).